The primary structure comprises 234 residues: Probable pectate lyase F (234 aa).

An N-terminal signal peptide occupies residues Met-1–Ala-17.

The protein belongs to the polysaccharide lyase 3 family. Ca(2+) is required as a cofactor.

The protein resides in the secreted. The enzyme catalyses Eliminative cleavage of (1-&gt;4)-alpha-D-galacturonan to give oligosaccharides with 4-deoxy-alpha-D-galact-4-enuronosyl groups at their non-reducing ends.. In terms of biological role, pectinolytic enzyme consist of four classes of enzymes: pectin lyase, polygalacturonase, pectin methylesterase and rhamnogalacturonase. Among pectinolytic enzymes, pectin lyase is the most important in depolymerization of pectin, since it cleaves internal glycosidic bonds of highly methylated pectins. Favors pectate, the anion, over pectin, the methyl ester. The protein is Probable pectate lyase F (plyF) of Aspergillus fumigatus (strain ATCC MYA-4609 / CBS 101355 / FGSC A1100 / Af293) (Neosartorya fumigata).